A 447-amino-acid polypeptide reads, in one-letter code: Vasoactive intestinal polypeptide receptor (447 aa).

Over 1-103 the chain is Extracellular; the sequence is MCDVVNEIEL…VDDDSFFRSV (103 aa). 3 cysteine pairs are disulfide-bonded: Cys-15-Cys-36, Cys-27-Cys-69, and Cys-50-Cys-86. N-linked (GlcNAc...) asparagine glycosylation is found at Asn-17, Asn-22, Asn-64, and Asn-91. Residues 104-128 traverse the membrane as a helical segment; it reads KIGYTIGHSVSLISLTTAIVILCMS. Topologically, residues 129–135 are cytoplasmic; sequence RKLHCTR. The chain crosses the membrane as a helical span at residues 136–155; sequence NYIHMHLFVSFILKAIAVFV. The Extracellular portion of the chain corresponds to 156 to 178; it reads KDAVLYDVIQESDNCSTASVGCK. An N-linked (GlcNAc...) asparagine glycan is attached at Asn-169. Cys-177 and Cys-247 are disulfide-bonded. The chain crosses the membrane as a helical span at residues 179–202; that stretch reads AVIVFFQYCIMASFFWLLVEGLYL. Over 203–216 the chain is Cytoplasmic; the sequence is HALLAVSFFSERKY. A helical membrane pass occupies residues 217 to 238; the sequence is FWWYILIGWGGPTIFIMAWSFA. Residues 239 to 256 are Extracellular-facing; the sequence is KAYFNDVGCWDIIENSDL. The helical transmembrane segment at 257–280 threads the bilayer; the sequence is FWWIIKTPILASILMNFILFICII. The Cytoplasmic portion of the chain corresponds to 281 to 305; it reads RILRQKINCPDIGRNESNQYSRLAK. The helical transmembrane segment at 306-325 threads the bilayer; that stretch reads STLLLIPLFGINFIIFAFIP. At 326 to 337 the chain is on the extracellular side; it reads ENIKTELRLVFD. A helical membrane pass occupies residues 338-357; that stretch reads LILGSFQGFVVAVLYCFLNG. Residues 358–447 lie on the Cytoplasmic side of the membrane; it reads EVQAEIKRKW…KGHEDVREVS (90 aa).

This sequence belongs to the G-protein coupled receptor 2 family.

The protein localises to the cell membrane. Functionally, this is a receptor for VIP. The activity of this receptor is mediated by G proteins which activate adenylyl cyclase. The sequence is that of Vasoactive intestinal polypeptide receptor (vipr1) from Carassius auratus (Goldfish).